The sequence spans 90 residues: DNA-binding protein HU-beta (90 aa).

Belongs to the bacterial histone-like protein family. As to quaternary structure, heterodimer of an alpha and a beta chain.

Histone-like DNA-binding protein which is capable of wrapping DNA to stabilize it, and thus to prevent its denaturation under extreme environmental conditions. In Salmonella typhi, this protein is DNA-binding protein HU-beta (hupB).